We begin with the raw amino-acid sequence, 178 residues long: Beta-lactoglobulin-1A/1C (178 aa).

Residues 1-18 (MRCLLLTLGLALLCGVQA) form the signal peptide. Cystine bridges form between cysteine 84–cysteine 176 and cysteine 124–cysteine 137.

Belongs to the calycin superfamily. Lipocalin family. As to quaternary structure, under physiological conditions beta-lactoglobulin exists as an equilibrium mixture of monomeric and dimeric forms.

The protein resides in the secreted. In terms of biological role, lactoglobulin is the primary component of whey, it binds retinol and is probably involved in the transport of that molecule. This Sus scrofa (Pig) protein is Beta-lactoglobulin-1A/1C.